Consider the following 443-residue polypeptide: ATP-dependent protease ATPase subunit HslU (443 aa).

ATP is bound by residues I18, 60 to 65 (GVGKTE), D256, E321, and R393.

Belongs to the ClpX chaperone family. HslU subfamily. A double ring-shaped homohexamer of HslV is capped on each side by a ring-shaped HslU homohexamer. The assembly of the HslU/HslV complex is dependent on binding of ATP.

The protein resides in the cytoplasm. Functionally, ATPase subunit of a proteasome-like degradation complex; this subunit has chaperone activity. The binding of ATP and its subsequent hydrolysis by HslU are essential for unfolding of protein substrates subsequently hydrolyzed by HslV. HslU recognizes the N-terminal part of its protein substrates and unfolds these before they are guided to HslV for hydrolysis. The sequence is that of ATP-dependent protease ATPase subunit HslU from Shigella boydii serotype 18 (strain CDC 3083-94 / BS512).